Here is a 203-residue protein sequence, read N- to C-terminus: Thymidylate kinase (203 aa).

Residue 10 to 17 (GIDGSGKS) participates in ATP binding.

The protein belongs to the thymidylate kinase family.

The catalysed reaction is dTMP + ATP = dTDP + ADP. In terms of biological role, phosphorylation of dTMP to form dTDP in both de novo and salvage pathways of dTTP synthesis. This Brachyspira hyodysenteriae (strain ATCC 49526 / WA1) protein is Thymidylate kinase.